The sequence spans 377 residues: Carbamoyl phosphate synthase small chain (377 aa).

The CPSase stretch occupies residues 1–186; it reads MSTPALLVLA…LGKGFVTPDE (186 aa). The L-glutamine site is built by serine 47, glycine 238, and glycine 240. The Glutamine amidotransferase type-1 domain occupies 190–377; that stretch reads HVVAYDFGVK…IGNMKAAKRA (188 aa). The Nucleophile role is filled by cysteine 266. Residues leucine 267, glutamine 270, asparagine 308, glycine 310, and phenylalanine 311 each contribute to the L-glutamine site. Residues histidine 350 and glutamate 352 contribute to the active site.

Belongs to the CarA family. Composed of two chains; the small (or glutamine) chain promotes the hydrolysis of glutamine to ammonia, which is used by the large (or ammonia) chain to synthesize carbamoyl phosphate. Tetramer of heterodimers (alpha,beta)4.

It carries out the reaction hydrogencarbonate + L-glutamine + 2 ATP + H2O = carbamoyl phosphate + L-glutamate + 2 ADP + phosphate + 2 H(+). The catalysed reaction is L-glutamine + H2O = L-glutamate + NH4(+). Its pathway is amino-acid biosynthesis; L-arginine biosynthesis; carbamoyl phosphate from bicarbonate: step 1/1. The protein operates within pyrimidine metabolism; UMP biosynthesis via de novo pathway; (S)-dihydroorotate from bicarbonate: step 1/3. In terms of biological role, small subunit of the glutamine-dependent carbamoyl phosphate synthetase (CPSase). CPSase catalyzes the formation of carbamoyl phosphate from the ammonia moiety of glutamine, carbonate, and phosphate donated by ATP, constituting the first step of 2 biosynthetic pathways, one leading to arginine and/or urea and the other to pyrimidine nucleotides. The small subunit (glutamine amidotransferase) binds and cleaves glutamine to supply the large subunit with the substrate ammonia. The polypeptide is Carbamoyl phosphate synthase small chain (Neisseria meningitidis serogroup B (strain ATCC BAA-335 / MC58)).